The sequence spans 381 residues: Alkanesulfonate monooxygenase (381 aa).

This sequence belongs to the SsuD family. Homotetramer.

It carries out the reaction an alkanesulfonate + FMNH2 + O2 = an aldehyde + FMN + sulfite + H2O + 2 H(+). Its function is as follows. Catalyzes the desulfonation of aliphatic sulfonates. This Escherichia coli O1:K1 / APEC protein is Alkanesulfonate monooxygenase.